We begin with the raw amino-acid sequence, 538 residues long: Bifunctional purine biosynthesis protein PurH (538 aa).

The MGS-like domain occupies 8-158 (IPAPDKVEIK…KNHAYVTILT (151 aa)).

This sequence belongs to the PurH family.

The catalysed reaction is (6R)-10-formyltetrahydrofolate + 5-amino-1-(5-phospho-beta-D-ribosyl)imidazole-4-carboxamide = 5-formamido-1-(5-phospho-D-ribosyl)imidazole-4-carboxamide + (6S)-5,6,7,8-tetrahydrofolate. It carries out the reaction IMP + H2O = 5-formamido-1-(5-phospho-D-ribosyl)imidazole-4-carboxamide. It participates in purine metabolism; IMP biosynthesis via de novo pathway; 5-formamido-1-(5-phospho-D-ribosyl)imidazole-4-carboxamide from 5-amino-1-(5-phospho-D-ribosyl)imidazole-4-carboxamide (10-formyl THF route): step 1/1. It functions in the pathway purine metabolism; IMP biosynthesis via de novo pathway; IMP from 5-formamido-1-(5-phospho-D-ribosyl)imidazole-4-carboxamide: step 1/1. The chain is Bifunctional purine biosynthesis protein PurH from Rhizobium etli (strain ATCC 51251 / DSM 11541 / JCM 21823 / NBRC 15573 / CFN 42).